The sequence spans 22 residues: Bacteriocin serracin-P 23 kDa subunit (22 aa).

Its function is as follows. Major component of a prophage tail tube. In terms of biological role, antibacterial activity against Gram-negative bacterium E.amylovora. This is Bacteriocin serracin-P 23 kDa subunit from Serratia plymuthica.